Here is a 119-residue protein sequence, read N- to C-terminus: Ribosome-binding factor A (119 aa).

It belongs to the RbfA family. As to quaternary structure, monomer. Binds 30S ribosomal subunits, but not 50S ribosomal subunits or 70S ribosomes.

It localises to the cytoplasm. Functionally, one of several proteins that assist in the late maturation steps of the functional core of the 30S ribosomal subunit. Associates with free 30S ribosomal subunits (but not with 30S subunits that are part of 70S ribosomes or polysomes). Required for efficient processing of 16S rRNA. May interact with the 5'-terminal helix region of 16S rRNA. This Pelodictyon phaeoclathratiforme (strain DSM 5477 / BU-1) protein is Ribosome-binding factor A.